The following is a 168-amino-acid chain: Cell division inhibitor SulA (168 aa).

The tract at residues 105–111 is ftsZ binding; the sequence is ALETGNY. A lon protease binding region spans residues 161–168; that stretch reads RIHSRMVH.

The protein belongs to the SulA family. In terms of assembly, interacts with FtsZ. Is rapidly cleaved and degraded by the Lon protease once DNA damage is repaired.

Component of the SOS system and an inhibitor of cell division. Accumulation of SulA causes rapid cessation of cell division and the appearance of long, non-septate filaments. In the presence of GTP, binds a polymerization-competent form of FtsZ in a 1:1 ratio, thus inhibiting FtsZ polymerization and therefore preventing it from participating in the assembly of the Z ring. This mechanism prevents the premature segregation of damaged DNA to daughter cells during cell division. The polypeptide is Cell division inhibitor SulA (Cronobacter turicensis (strain DSM 18703 / CCUG 55852 / LMG 23827 / z3032)).